A 127-amino-acid polypeptide reads, in one-letter code: Phosphoribosyl-ATP pyrophosphatase (127 aa).

The protein belongs to the PRA-PH family.

The protein localises to the cytoplasm. The catalysed reaction is 1-(5-phospho-beta-D-ribosyl)-ATP + H2O = 1-(5-phospho-beta-D-ribosyl)-5'-AMP + diphosphate + H(+). It functions in the pathway amino-acid biosynthesis; L-histidine biosynthesis; L-histidine from 5-phospho-alpha-D-ribose 1-diphosphate: step 2/9. The polypeptide is Phosphoribosyl-ATP pyrophosphatase (Polaromonas sp. (strain JS666 / ATCC BAA-500)).